Reading from the N-terminus, the 347-residue chain is NADH-ubiquinone oxidoreductase chain 2 (347 aa).

9 helical membrane passes run 3 to 23 (PPIF…VLIS), 25 to 45 (HWLL…PILM), 59 to 79 (YFLT…INLL), 111 to 131 (FHFW…MILL), 149 to 169 (INPN…GWGG), 200 to 220 (LMHL…MLFM), 242 to 262 (LLIL…GFIP), 274 to 294 (NMII…YFYM), and 325 to 345 (LLPP…MMLI).

This sequence belongs to the complex I subunit 2 family. In terms of assembly, core subunit of respiratory chain NADH dehydrogenase (Complex I) which is composed of 45 different subunits. Interacts with TMEM242.

The protein localises to the mitochondrion inner membrane. It catalyses the reaction a ubiquinone + NADH + 5 H(+)(in) = a ubiquinol + NAD(+) + 4 H(+)(out). Functionally, core subunit of the mitochondrial membrane respiratory chain NADH dehydrogenase (Complex I) which catalyzes electron transfer from NADH through the respiratory chain, using ubiquinone as an electron acceptor. Essential for the catalytic activity and assembly of complex I. The polypeptide is NADH-ubiquinone oxidoreductase chain 2 (Ailurus fulgens (Himalayan red panda)).